Here is a 496-residue protein sequence, read N- to C-terminus: Protein RepR (496 aa).

The DNA-binding element occupies 120 to 141 (SDILTTAIDLGFMPTLIIKSDK).

In terms of biological role, essential for replication. This is Protein RepR (repR) from Streptococcus agalactiae.